Here is a 456-residue protein sequence, read N- to C-terminus: Mitochondrial import inner membrane translocase subunit TIM50 (456 aa).

A mitochondrion-targeting transit peptide spans 1–22; it reads MSLSKLSQKCFSRHHARTFIRF. Over 23-171 the chain is Mitochondrial matrix; that stretch reads SSSDFQSLLG…RRKRMERNTR (149 aa). Disordered stretches follow at residues 101–120 and 132–165; these read ETEK…AIDE and EEAA…RRKR. Residues 137 to 153 are compositionally biased toward polar residues; sequence SKTSAPSGSSGDNNDQP. A helical membrane pass occupies residues 172 to 192; it reads IGGYVLLGGSVIGFISFCFYY. Topologically, residues 193 to 456 are mitochondrial intermembrane; sequence GRAQRDEAGN…LFGFRRHASA (264 aa). One can recognise an FCP1 homology domain in the interval 247 to 391; that stretch reads YLQPKYTIVI…VDLAELLKTI (145 aa).

Belongs to the TIM50 family. Component of the TIM23 complex at least composed of tim-23, tim-17 and tim-50.

The protein resides in the mitochondrion inner membrane. Essential component of the TIM23 complex, a complex that mediates the translocation of transit peptide-containing proteins across the mitochondrial inner membrane. This chain is Mitochondrial import inner membrane translocase subunit TIM50 (scpl-4), found in Caenorhabditis briggsae.